A 350-amino-acid polypeptide reads, in one-letter code: MFASLLLAALPLLTHAALTYRGADISSLLLLEDEGYSYKNLNGQTQALETILADAGINSIRQRVWVNPSDGSYDLDYNLELAKRVKAAGMSLYLDLHLSDTWADPSDQTTPSGWSTTDLGTLKWQLYNYTLEVCNTFAENDIDIEIISIGNEIRAGLLWPLGETSSYSNIGALLHSGAWGVKDSNLATTPKIMIHLDDGWSWDQQNYFYETVLATGELLSTDFDYFGVSYYPFYSASATLASLKTSLANLQSTYDKPVVVVETNWPVSCPNPAYAFPSDLSSIPFSVAGQQEFLEKLAAVVEATTDGLGVYYWEPAWIGNAGLGSSCADNLMVDYTTDEVYESIETLGEL.

Residues 1 to 16 (MFASLLLAALPLLTHA) form the signal peptide. Residue Asn-128 is glycosylated (N-linked (GlcNAc...) asparagine). The Proton donor role is filled by Glu-152. The active-site Nucleophile is Glu-262.

It belongs to the glycosyl hydrolase 53 family. In terms of processing, glycosylated.

It carries out the reaction The enzyme specifically hydrolyzes (1-&gt;4)-beta-D-galactosidic linkages in type I arabinogalactans.. This Aspergillus aculeatus protein is Arabinogalactan endo-beta-1,4-galactanase (gal1).